A 381-amino-acid chain; its full sequence is Protein kinase gsk31 (381 aa).

Residues 25-309 enclose the Protein kinase domain; that stretch reads YEPCRVLGSG…AIEVLTHPFF (285 aa). ATP-binding positions include 31-39 and K54; that span reads LGSGSFGVV. Residue D150 is the Proton acceptor of the active site. S184 carries the post-translational modification Phosphoserine. Phosphotyrosine is present on Y185.

It belongs to the protein kinase superfamily. CMGC Ser/Thr protein kinase family. GSK-3 subfamily.

It catalyses the reaction L-seryl-[protein] + ATP = O-phospho-L-seryl-[protein] + ADP + H(+). The enzyme catalyses L-threonyl-[protein] + ATP = O-phospho-L-threonyl-[protein] + ADP + H(+). In Schizosaccharomyces pombe (strain 972 / ATCC 24843) (Fission yeast), this protein is Protein kinase gsk31 (gsk31).